Consider the following 153-residue polypeptide: MKVRVVAVGRDRSGLYAPAVEEYAKRLGRYLRFELVEVPEARKLAGTAGAKGEEGATLLAKIGPRERVVVLDERGDELTSVAFAERVRRWMERGQDVALLIGGSDGLAPEVLARADERLAVSRFTLAHRLARLVLVEQLYRAMTILRGEPYHK.

2 residues coordinate S-adenosyl-L-methionine: Leu71 and Gly102.

This sequence belongs to the RNA methyltransferase RlmH family. In terms of assembly, homodimer.

The protein localises to the cytoplasm. It carries out the reaction pseudouridine(1915) in 23S rRNA + S-adenosyl-L-methionine = N(3)-methylpseudouridine(1915) in 23S rRNA + S-adenosyl-L-homocysteine + H(+). Specifically methylates the pseudouridine at position 1915 (m3Psi1915) in 23S rRNA. This chain is Ribosomal RNA large subunit methyltransferase H, found in Anaeromyxobacter sp. (strain K).